Consider the following 272-residue polypeptide: NADPH-dependent 7-cyano-7-deazaguanine reductase (272 aa).

80 to 82 provides a ligand contact to substrate; the sequence is VES. An NADPH-binding site is contributed by 82–83; the sequence is SK. The Thioimide intermediate role is filled by cysteine 178. The Proton donor role is filled by aspartate 185. 217-218 provides a ligand contact to substrate; that stretch reads AE. 246–247 lines the NADPH pocket; it reads RG.

This sequence belongs to the GTP cyclohydrolase I family. QueF type 2 subfamily. As to quaternary structure, homodimer.

Its subcellular location is the cytoplasm. The enzyme catalyses 7-aminomethyl-7-carbaguanine + 2 NADP(+) = 7-cyano-7-deazaguanine + 2 NADPH + 3 H(+). The protein operates within tRNA modification; tRNA-queuosine biosynthesis. Functionally, catalyzes the NADPH-dependent reduction of 7-cyano-7-deazaguanine (preQ0) to 7-aminomethyl-7-deazaguanine (preQ1). The polypeptide is NADPH-dependent 7-cyano-7-deazaguanine reductase (Rickettsia typhi (strain ATCC VR-144 / Wilmington)).